The sequence spans 460 residues: Transcription factor AP-2-beta (460 aa).

A Glycyl lysine isopeptide (Lys-Gly) (interchain with G-Cter in SUMO) cross-link involves residue Lys-21. A disordered region spans residues 30–139; the sequence is HDGVPSHSSR…PQLSGLDPRR (110 aa). Polar residues predominate over residues 35–51; that stretch reads SHSSRLSQLGSVSQGPY. Residues 121 to 132 are compositionally biased toward low complexity; it reads LLPQPRAALPQL. Residue Ser-258 is modified to Phosphoserine; by PKA. The tract at residues 435-460 is disordered; the sequence is NTTTNRHTSGEGPGSKTGDKEEKHRK. A compositionally biased stretch (basic and acidic residues) spans 451 to 460; that stretch reads TGDKEEKHRK.

Belongs to the AP-2 family. In terms of assembly, binds DNA as a dimer. Can form homodimers or heterodimers with other AP-2 family members. Interacts with CITED4. Interacts with UBE2I. Interacts with KCTD1; this interaction represses transcription activation. Interacts with CITED2 (via C-terminus); the interaction stimulates TFAP2B-transcriptional activity. In terms of processing, sumoylated on Lys-21; which inhibits transcriptional activity.

Its subcellular location is the nucleus. Functionally, sequence-specific DNA-binding protein that interacts with inducible viral and cellular enhancer elements to regulate transcription of selected genes. AP-2 factors bind to the consensus sequence 5'-GCCNNNGGC-3' and activate genes involved in a large spectrum of important biological functions including proper eye, face, body wall, limb and neural tube development. They also suppress a number of genes including MCAM/MUC18, C/EBP alpha and MYC. AP-2-beta appears to be required for normal face and limb development and for proper terminal differentiation and function of renal tubular epithelia. The chain is Transcription factor AP-2-beta (TFAP2B) from Canis lupus familiaris (Dog).